The sequence spans 112 residues: uncharacterized protein (112 aa).

Its subcellular location is the plastid. It localises to the chloroplast. This is an uncharacterized protein from Chlamydomonas reinhardtii (Chlamydomonas smithii).